Consider the following 228-residue polypeptide: Orotate phosphoribosyltransferase (228 aa).

Lys-26 lines the 5-phospho-alpha-D-ribose 1-diphosphate pocket. Residue 34–35 (FF) participates in orotate binding. Residues 72 to 73 (YK), Arg-98, Lys-99, Lys-102, His-104, and 123 to 131 (DDVISAGTS) each bind 5-phospho-alpha-D-ribose 1-diphosphate. The orotate site is built by Ser-127 and Arg-155.

Belongs to the purine/pyrimidine phosphoribosyltransferase family. PyrE subfamily. As to quaternary structure, homodimer. It depends on Mg(2+) as a cofactor.

It catalyses the reaction orotidine 5'-phosphate + diphosphate = orotate + 5-phospho-alpha-D-ribose 1-diphosphate. It participates in pyrimidine metabolism; UMP biosynthesis via de novo pathway; UMP from orotate: step 1/2. In terms of biological role, catalyzes the transfer of a ribosyl phosphate group from 5-phosphoribose 1-diphosphate to orotate, leading to the formation of orotidine monophosphate (OMP). This is Orotate phosphoribosyltransferase from Nitrosospira multiformis (strain ATCC 25196 / NCIMB 11849 / C 71).